The following is a 241-amino-acid chain: Lactate utilization protein C (241 aa).

This sequence belongs to the LutC/YkgG family.

In terms of biological role, is involved in L-lactate degradation and allows cells to grow with lactate as the sole carbon source. In Bacillus velezensis (strain DSM 23117 / BGSC 10A6 / LMG 26770 / FZB42) (Bacillus amyloliquefaciens subsp. plantarum), this protein is Lactate utilization protein C.